The following is a 581-amino-acid chain: La-related protein 7 (581 aa).

Met1 bears the N-acetylmethionine mark. The segment covering 1-10 (METESGNQKN) has biased composition (polar residues). 3 disordered regions span residues 1–28 (METE…KKKR), 188–368 (NPPE…ERHK), and 410–440 (KSES…CPTQ). Positions 28 to 122 (RSRVKQVLAD…KPLGERPKDE (95 aa)) constitute an HTH La-type RNA-binding domain. Residues 125-203 (RTVYVELLPK…PRKPGIFPKT (79 aa)) enclose the RRM domain. Basic residues predominate over residues 219 to 228 (KKKKKKKGRM). Positions 229–240 (KKEDNVQAKEEN) are enriched in basic and acidic residues. Lys237 participates in a covalent cross-link: Glycyl lysine isopeptide (Lys-Gly) (interchain with G-Cter in SUMO2). Thr257 carries the phosphothreonine modification. Phosphoserine is present on residues Ser258, Ser261, Ser273, Ser298, Ser299, and Ser300. The segment covering 316–335 (IQKDIIKEPSEASKENRDIE) has biased composition (basic and acidic residues). Position 337 is a phosphoserine (Ser337). Thr338 carries the post-translational modification Phosphothreonine. Residue Ser351 is modified to Phosphoserine. Positions 354–367 (KTKRKHKKKHKERH) are enriched in basic residues. Lys410 is covalently cross-linked (Glycyl lysine isopeptide (Lys-Gly) (interchain with G-Cter in SUMO2)). One can recognise a xRRM domain in the interval 449–562 (QFVSGVIVKI…TEKLITKAEK (114 aa)).

The protein belongs to the LARP7 family. As to quaternary structure, core component of the 7SK RNP complex, at least composed of 7SK RNA, LARP7, MEPCE, HEXIM1 (or HEXIM2) and P-TEFb (composed of CDK9 and CCNT1/cyclin-T1). Interacts with METTL16. Interacts with RBM7; upon genotoxic stress this interaction is enhanced, triggering the release of inactive P-TEFb complex from the core, yielding to P-TEFb complex activation. Associates with box C/D small nucleolar ribonucleoprotein (snoRNP) complexes.

The protein resides in the nucleus. The protein localises to the nucleoplasm. Functionally, RNA-binding protein that specifically binds distinct small nuclear RNA (snRNAs) and regulates their processing and function. Specifically binds the 7SK snRNA (7SK RNA) and acts as a core component of the 7SK ribonucleoprotein (RNP) complex, thereby acting as a negative regulator of transcription elongation by RNA polymerase II. The 7SK RNP complex sequesters the positive transcription elongation factor b (P-TEFb) in a large inactive 7SK RNP complex preventing RNA polymerase II phosphorylation and subsequent transcriptional elongation. The 7SK RNP complex also promotes snRNA gene transcription by RNA polymerase II via interaction with the little elongation complex (LEC). LARP7 specifically binds to the highly conserved 3'-terminal U-rich stretch of 7SK RNA; on stimulation, remains associated with 7SK RNA, whereas P-TEFb is released from the complex. LARP7 also acts as a regulator of mRNA splicing fidelity by promoting U6 snRNA processing. Specifically binds U6 snRNAs and associates with a subset of box C/D RNP complexes: promotes U6 snRNA 2'-O-methylation by facilitating U6 snRNA loading into box C/D RNP complexes. U6 snRNA 2'-O-methylation is required for mRNA splicing fidelity. Binds U6 snRNAs with a 5'-CAGGG-3' sequence motif. U6 snRNA processing is required for spermatogenesis. This is La-related protein 7 from Macaca fascicularis (Crab-eating macaque).